The chain runs to 62 residues: uncharacterized protein (62 aa).

2 helical membrane passes run 9–29 and 42–62; these read HNELLEFFHLFVTIQWLALIG and AAVVGFFIRFTFGTPIFLQLL.

The protein resides in the membrane. This is an uncharacterized protein from Saccharomyces cerevisiae (strain ATCC 204508 / S288c) (Baker's yeast).